The sequence spans 30 residues: Arsenate respiratory reductase iron-sulfur subunit ArrB (30 aa).

Positions 12, 15, 18, and 22 each coordinate [4Fe-4S] cluster.

Heterodimer composed of one large subunit (ArrA) and one small subunit (ArrB). [4Fe-4S] cluster is required as a cofactor.

The protein resides in the periplasm. In terms of biological role, component of the arsenate respiratory reductase (Arr) complex, which catalyzes the reduction of arsenate (As(V)) to arsenite (As(III)). ArrB is probably the electron transfer subunit. The protein is Arsenate respiratory reductase iron-sulfur subunit ArrB of Chrysiogenes arsenatis.